The chain runs to 277 residues: Undecaprenyl-diphosphatase (277 aa).

7 helical membrane passes run 5 to 25 (WTAAQALILGVVEGLTEFLPI), 44 to 64 (RAMAFNIIIQLGAILAVVWEF), 86 to 106 (LNLLIAFMPAVVLGVIFADTI), 110 to 130 (LFNAITVATALVVGGVIMLWA), 184 to 204 (AATEFSFFLAMPTMVGAAVYS), 219 to 239 (VFAIGFITSFIFAMIAVRALL), and 255 to 275 (IAFGLLILATWQFGWIDWASA).

It belongs to the UppP family.

Its subcellular location is the cell inner membrane. It catalyses the reaction di-trans,octa-cis-undecaprenyl diphosphate + H2O = di-trans,octa-cis-undecaprenyl phosphate + phosphate + H(+). Functionally, catalyzes the dephosphorylation of undecaprenyl diphosphate (UPP). Confers resistance to bacitracin. The sequence is that of Undecaprenyl-diphosphatase from Pseudomonas savastanoi pv. phaseolicola (strain 1448A / Race 6) (Pseudomonas syringae pv. phaseolicola (strain 1448A / Race 6)).